A 473-amino-acid polypeptide reads, in one-letter code: Photosystem II CP43 reaction center protein (473 aa).

Residues 1 to 14 (MKTLYSLRRFYPVE) constitute a propeptide that is removed on maturation. Position 15 is an N-acetylthreonine (T15). Phosphothreonine is present on T15. The next 5 helical transmembrane spans lie at 69 to 93 (LFEV…PHLA), 134 to 155 (LLGP…KDRN), 178 to 200 (KALY…RKIT), 255 to 275 (KPFA…LSYS), and 291 to 312 (WFNN…ASQA). E367 is a binding site for [CaMn4O5] cluster. The helical transmembrane segment at 447 to 471 (RARAAAAGFEKGIDRDFEPVLSMTP) threads the bilayer.

Belongs to the PsbB/PsbC family. PsbC subfamily. In terms of assembly, PSII is composed of 1 copy each of membrane proteins PsbA, PsbB, PsbC, PsbD, PsbE, PsbF, PsbH, PsbI, PsbJ, PsbK, PsbL, PsbM, PsbT, PsbX, PsbY, PsbZ, Psb30/Ycf12, at least 3 peripheral proteins of the oxygen-evolving complex and a large number of cofactors. It forms dimeric complexes. Requires Binds multiple chlorophylls and provides some of the ligands for the Ca-4Mn-5O cluster of the oxygen-evolving complex. It may also provide a ligand for a Cl- that is required for oxygen evolution. PSII binds additional chlorophylls, carotenoids and specific lipids. as cofactor.

The protein resides in the plastid. The protein localises to the chloroplast thylakoid membrane. One of the components of the core complex of photosystem II (PSII). It binds chlorophyll and helps catalyze the primary light-induced photochemical processes of PSII. PSII is a light-driven water:plastoquinone oxidoreductase, using light energy to abstract electrons from H(2)O, generating O(2) and a proton gradient subsequently used for ATP formation. This chain is Photosystem II CP43 reaction center protein, found in Calycanthus floridus var. glaucus (Eastern sweetshrub).